The chain runs to 365 residues: 4-hydroxy-tetrahydrodipicolinate synthase 1, chloroplastic (365 aa).

Residues 1–39 constitute a chloroplast transit peptide; sequence MSALKNYGLISIDSALHFPRSNQLQSYKRRNAKWVSPIA. T108 lines the pyruvate pocket. The Proton donor/acceptor role is filled by Y194. The active-site Schiff-base intermediate with substrate is K222. Residue I261 participates in pyruvate binding.

This sequence belongs to the DapA family.

It localises to the plastid. The protein localises to the chloroplast. It carries out the reaction L-aspartate 4-semialdehyde + pyruvate = (2S,4S)-4-hydroxy-2,3,4,5-tetrahydrodipicolinate + H2O + H(+). It participates in amino-acid biosynthesis; L-lysine biosynthesis via DAP pathway; (S)-tetrahydrodipicolinate from L-aspartate: step 3/4. Catalyzes the condensation of (S)-aspartate-beta-semialdehyde [(S)-ASA] and pyruvate to 4-hydroxy-tetrahydrodipicolinate (HTPA). In Arabidopsis thaliana (Mouse-ear cress), this protein is 4-hydroxy-tetrahydrodipicolinate synthase 1, chloroplastic (DHDPS1).